The sequence spans 409 residues: Effector protein BipC (409 aa).

Disordered regions lie at residues 268–287 (RETG…RMSD) and 330–396 (SGGQ…VAND). Residues 360-369 (AQQTAMAAAS) show a composition bias toward low complexity. Positions 370–382 (ARDEAAHRGRDAA) are enriched in basic and acidic residues.

Belongs to the SctB/SipC family.

The protein localises to the secreted. This is Effector protein BipC (bipC) from Burkholderia thailandensis (strain ATCC 700388 / DSM 13276 / CCUG 48851 / CIP 106301 / E264).